We begin with the raw amino-acid sequence, 320 residues long: ADP-L-glycero-D-manno-heptose-6-epimerase (320 aa).

Residues 10-11, 31-32, lysine 38, lysine 53, 75-79, and asparagine 92 contribute to the NADP(+) site; these read FI, DN, and LGACS. Catalysis depends on tyrosine 139, which acts as the Proton acceptor. Residue lysine 143 coordinates NADP(+). Asparagine 168 provides a ligand contact to substrate. NADP(+) contacts are provided by valine 169 and lysine 177. The active-site Proton acceptor is the lysine 177. Substrate contacts are provided by residues glycine 179, histidine 186, 200–203, arginine 213, and tyrosine 277; that span reads FEGS.

This sequence belongs to the NAD(P)-dependent epimerase/dehydratase family. HldD subfamily. As to quaternary structure, homopentamer. NADP(+) is required as a cofactor.

It carries out the reaction ADP-D-glycero-beta-D-manno-heptose = ADP-L-glycero-beta-D-manno-heptose. Its pathway is nucleotide-sugar biosynthesis; ADP-L-glycero-beta-D-manno-heptose biosynthesis; ADP-L-glycero-beta-D-manno-heptose from D-glycero-beta-D-manno-heptose 7-phosphate: step 4/4. In terms of biological role, catalyzes the interconversion between ADP-D-glycero-beta-D-manno-heptose and ADP-L-glycero-beta-D-manno-heptose via an epimerization at carbon 6 of the heptose. The sequence is that of ADP-L-glycero-D-manno-heptose-6-epimerase from Alkalilimnicola ehrlichii (strain ATCC BAA-1101 / DSM 17681 / MLHE-1).